The primary structure comprises 701 residues: Elongation factor G (701 aa).

A tr-type G domain is found at 8–290 (SRYRNIGISA…AVIEYLPAPT (283 aa)). GTP-binding positions include 17 to 24 (AHIDAGKT), 88 to 92 (DTPGH), and 142 to 145 (NKMD).

It belongs to the TRAFAC class translation factor GTPase superfamily. Classic translation factor GTPase family. EF-G/EF-2 subfamily.

The protein resides in the cytoplasm. In terms of biological role, catalyzes the GTP-dependent ribosomal translocation step during translation elongation. During this step, the ribosome changes from the pre-translocational (PRE) to the post-translocational (POST) state as the newly formed A-site-bound peptidyl-tRNA and P-site-bound deacylated tRNA move to the P and E sites, respectively. Catalyzes the coordinated movement of the two tRNA molecules, the mRNA and conformational changes in the ribosome. This chain is Elongation factor G, found in Actinobacillus pleuropneumoniae serotype 5b (strain L20).